A 265-amino-acid chain; its full sequence is MPQVTMRQMLEAGVHFGHQTRYWNPKMAPYIFGARGKIHIINLEKTVPLFNDAMNFLSSVAQKRGTVLFLGTKRSARESIKEEAERCNMPFMTQRWLGGTLTNFRTVKQSVARLKELEAAETDGTFDKLVKHEVLGLRREREKLDASLGGIKEMNRLPDAIFVIDIGHEDIAIKEAKKLGIPVIAVVDTNYDPALVDYAIPGNDDAIRAVQLYARAAADAVLEGKAAAPNSASVREEEFSADAADEGKGRRAPAKKGDKKADAAE.

Positions 226–265 (AAAPNSASVREEEFSADAADEGKGRRAPAKKGDKKADAAE) are disordered. Over residues 245 to 265 (DEGKGRRAPAKKGDKKADAAE) the composition is skewed to basic and acidic residues.

Belongs to the universal ribosomal protein uS2 family.

The chain is Small ribosomal subunit protein uS2 from Xanthomonas axonopodis pv. citri (strain 306).